Consider the following 282-residue polypeptide: NADPH-dependent 7-cyano-7-deazaguanine reductase (282 aa).

Substrate is bound at residue 88–90 (IES). 90–91 (SK) serves as a coordination point for NADPH. Cys190 (thioimide intermediate) is an active-site residue. Catalysis depends on Asp197, which acts as the Proton donor. 229–230 (HE) contributes to the substrate binding site. NADPH is bound at residue 258 to 259 (RG).

This sequence belongs to the GTP cyclohydrolase I family. QueF type 2 subfamily. As to quaternary structure, homodimer.

Its subcellular location is the cytoplasm. The catalysed reaction is 7-aminomethyl-7-carbaguanine + 2 NADP(+) = 7-cyano-7-deazaguanine + 2 NADPH + 3 H(+). Its pathway is tRNA modification; tRNA-queuosine biosynthesis. In terms of biological role, catalyzes the NADPH-dependent reduction of 7-cyano-7-deazaguanine (preQ0) to 7-aminomethyl-7-deazaguanine (preQ1). In Salmonella schwarzengrund (strain CVM19633), this protein is NADPH-dependent 7-cyano-7-deazaguanine reductase.